Consider the following 364-residue polypeptide: 3-isopropylmalate dehydrogenase (364 aa).

77-90 (GPKWDNLPTDKRPE) is an NAD(+) binding site. Residues arginine 97, arginine 107, arginine 135, and aspartate 224 each contribute to the substrate site. Residues aspartate 224, aspartate 248, and aspartate 252 each contribute to the Mg(2+) site. 281–293 (GSAPDIAGKGIAN) is an NAD(+) binding site.

The protein belongs to the isocitrate and isopropylmalate dehydrogenases family. LeuB type 1 subfamily. In terms of assembly, homodimer. The cofactor is Mg(2+). Requires Mn(2+) as cofactor.

Its subcellular location is the cytoplasm. The catalysed reaction is (2R,3S)-3-isopropylmalate + NAD(+) = 4-methyl-2-oxopentanoate + CO2 + NADH. Its pathway is amino-acid biosynthesis; L-leucine biosynthesis; L-leucine from 3-methyl-2-oxobutanoate: step 3/4. Catalyzes the oxidation of 3-carboxy-2-hydroxy-4-methylpentanoate (3-isopropylmalate) to 3-carboxy-4-methyl-2-oxopentanoate. The product decarboxylates to 4-methyl-2 oxopentanoate. The chain is 3-isopropylmalate dehydrogenase (leuB) from Aquifex aeolicus (strain VF5).